A 367-amino-acid polypeptide reads, in one-letter code: MSFDSVPRHALSMRFDLEPPSHASAAHRVAVLLVNLGTPDAPTPRAVRRYLAQFLSDPRVVEIPQLVWQVILCTLILPLRGRASAKKYAAVWLPEGSPLRVYTERQVESVKPLFAANGYRVIVDYAMRYGTPSIADVLAQLKRAGAERVLLLPMYPQYSSSTTATAFDAAFAALGRMRNQPEVRTVRHYADHPAYIHALAEQVRQYWAAHGRPAFDAGDKLVLSFHGVPKRTLDLGDPYHDQCQQTAALLMSALGLTTFECRVTFQSRFGKAEWLQPYTAPTLKELGAAGVRRADVFCPGFTADCLETIEEIGIEVRDEFVHGGGKEFHRIPCLNASPAWIAALGEIAAENLQGWPVRVAMAPEAVS.

The Fe cation site is built by His-226 and Glu-307.

The protein belongs to the ferrochelatase family.

It is found in the cytoplasm. The enzyme catalyses heme b + 2 H(+) = protoporphyrin IX + Fe(2+). The protein operates within porphyrin-containing compound metabolism; protoheme biosynthesis; protoheme from protoporphyrin-IX: step 1/1. Its function is as follows. Catalyzes the ferrous insertion into protoporphyrin IX. In Burkholderia mallei (strain NCTC 10247), this protein is Ferrochelatase.